The chain runs to 317 residues: Glutamyl-tRNA reductase-binding protein, chloroplastic (317 aa).

The N-terminal 42 residues, 1–42, are a transit peptide targeting the chloroplast; it reads MQLQTQSFALNLLPSPNFAKPIERREFISLKRDPSRPISLRC.

Interacts with HEMA1 and forms a heterotetramer of two GLUTRBP and two HEMA1 subunits.

Its subcellular location is the plastid. The protein resides in the chloroplast stroma. Involved in the regulation of glutamyl-tRNA reductase (GluTR) which is important for the synthesis and distribution of 5-aminolevulinate, a precursor in heme and chlorophyll biosynthesis. Stimulates GluTR activity and regulates glutamate-1-semialdehyde release. May play a role in heme metabolism. Necessary for efficient photosynthetic electron transport in chloroplasts. The protein is Glutamyl-tRNA reductase-binding protein, chloroplastic of Arabidopsis thaliana (Mouse-ear cress).